We begin with the raw amino-acid sequence, 212 residues long: uncharacterized protein (212 aa).

Helical transmembrane passes span 34–54 (IFGIVLVILSLPSALPIPAPG), 59–79 (FGVLIFLVAIQLMAGRQELWL), 126–146 (ILMGITVGSMAISMMIPIPGT), and 171–191 (AGMIFSVLIGVLMVSVIYVFF).

It to R.meliloti ExoD.

The protein resides in the cell membrane. This is an uncharacterized protein from Synechocystis sp. (strain ATCC 27184 / PCC 6803 / Kazusa).